The following is a 189-amino-acid chain: UPF0312 protein VIBHAR_05924 (189 aa).

The N-terminal stretch at 1–22 (MKKSLFATGLAIAIALPFGANA) is a signal peptide.

The protein belongs to the UPF0312 family. Type 1 subfamily.

Its subcellular location is the periplasm. The protein is UPF0312 protein VIBHAR_05924 of Vibrio campbellii (strain ATCC BAA-1116).